The following is a 308-amino-acid chain: Glutaminase 2 (308 aa).

Serine 66, asparagine 117, glutamate 161, asparagine 168, tyrosine 192, tyrosine 244, and valine 262 together coordinate substrate.

It belongs to the glutaminase family. In terms of assembly, homotetramer.

The enzyme catalyses L-glutamine + H2O = L-glutamate + NH4(+). The sequence is that of Glutaminase 2 from Escherichia coli O157:H7.